The following is a 493-amino-acid chain: Cytochrome P450 710A3 (493 aa).

The helical transmembrane segment at 5–25 threads the bilayer; it reads VSLFASLTPYLVSALLLFLLL. Cysteine 435 is a heme binding site.

Belongs to the cytochrome P450 family. Heme is required as a cofactor. Expressed in stems. Detected in primary root caps and immature petals.

Its subcellular location is the membrane. The catalysed reaction is 5-dehydroepisterol + NADPH + O2 + H(+) = ergosta-5,7,22,24(28)-tetraen-3beta-ol + NADP(+) + 2 H2O. In terms of biological role, required to form the C-22 double bond in the sterol side chain. Possesses in vitro C-22 desaturase activity toward beta-sitosterol and produces stigmasterol. The sequence is that of Cytochrome P450 710A3 from Arabidopsis thaliana (Mouse-ear cress).